A 265-amino-acid chain; its full sequence is MVKLTPELINQSMQYINPCRERELDLRGYKIPQIENLGATLDQFDTIDLSDNDLRKLDNLPHLPRLKCLLLNNNRILRISEGLEEAVPNLGSIILTGNNLQELSDLEPLVGFTKLETICLLINPVSTKPNYREYMAYKFPQLRLLDFRKIKQKDRQAAQEFFRTKQGKDVLKEISRKSKMSAAAAIAAEAGNGKGRGSEGGRLANPQDMQRIREAIKRASSLAEVERLSQILQSGQLPDKFQHEMEAVAQNGAGHNGSGAVAMEY.

LRR repeat units follow at residues 20-41 (RERE…GATL), 43-64 (QFDT…PHLP), 65-86 (RLKC…LEEA), and 89-110 (NLGS…EPLV). In terms of domain architecture, LRRCT spans 123-161 (NPVSTKPNYREYMAYKFPQLRLLDFRKIKQKDRQAAQEF).

The protein belongs to the U2 small nuclear ribonucleoprotein A family. Interacts with the SMN complex.

The protein localises to the nucleus. Its function is as follows. Involved in pre-mRNA splicing as component of the spliceosome. Associated with sn-RNP U2, where it contributes to the binding of stem loop IV of U2 snRNA. In the germ line, has a role in oogenesis, by regulating spermatogenesis and nurse cell nuclei chromatin decondensation and dispersal, probably by regulating the splicing of proteins necessary for germline differentiation such as the meiotic protein mei-P26. The sequence is that of Probable U2 small nuclear ribonucleoprotein A' (U2A) from Drosophila melanogaster (Fruit fly).